Reading from the N-terminus, the 107-residue chain is Ribonuclease P protein component 4 (107 aa).

Positions 66, 69, 92, and 95 each coordinate Zn(2+).

This sequence belongs to the eukaryotic/archaeal RNase P protein component 4 family. Consists of a catalytic RNA component and at least 4-5 protein subunits. Requires Zn(2+) as cofactor.

It is found in the cytoplasm. The catalysed reaction is Endonucleolytic cleavage of RNA, removing 5'-extranucleotides from tRNA precursor.. Part of ribonuclease P, a protein complex that generates mature tRNA molecules by cleaving their 5'-ends. The protein is Ribonuclease P protein component 4 of Methanosarcina acetivorans (strain ATCC 35395 / DSM 2834 / JCM 12185 / C2A).